Here is a 726-residue protein sequence, read N- to C-terminus: AP-1 complex subunit beta-1 (726 aa).

The protein belongs to the adaptor complexes large subunit family. In terms of assembly, adaptor protein complex 1 (AP-1) is a heterotetramer composed of two large adaptins (gamma-type subunit APL4 and beta-type subunit APL2), a medium adaptin (mu-type subunit APM1) and a small adaptin (sigma-type subunit APS1). Interacts with CHC1. Interacts with APM2, probably forming an alternative AP-1-like complex.

The protein resides in the cell membrane. It is found in the membrane. It localises to the coated pit. Adaptins are components of the adaptor complexes which link clathrin to receptors in coated vesicles. Clathrin-associated protein complexes are believed to interact with the cytoplasmic tails of membrane proteins, leading to their selection and concentration. The AP-1 complex interacts directly with clathrin. The protein is AP-1 complex subunit beta-1 (APL2) of Saccharomyces cerevisiae (strain ATCC 204508 / S288c) (Baker's yeast).